Consider the following 456-residue polypeptide: Trigger factor (456 aa).

The PPIase FKBP-type domain maps to 192 to 277; the sequence is GDTVVIDFVG…IHEVKTKEVP (86 aa).

The protein belongs to the FKBP-type PPIase family. Tig subfamily.

The protein localises to the cytoplasm. It catalyses the reaction [protein]-peptidylproline (omega=180) = [protein]-peptidylproline (omega=0). Its function is as follows. Involved in protein export. Acts as a chaperone by maintaining the newly synthesized protein in an open conformation. Functions as a peptidyl-prolyl cis-trans isomerase. The chain is Trigger factor from Streptococcus pyogenes serotype M4 (strain MGAS10750).